A 567-amino-acid chain; its full sequence is Restriction of telomere capping protein 5 (567 aa).

The TLDc domain maps to 289-515 (KVMTPALLAQ…IQDVEVWGCG (227 aa)).

The protein belongs to the RTC5 family.

It localises to the cytoplasm. May be involved in a process influencing telomere capping. The chain is Restriction of telomere capping protein 5 (RTC5) from Saccharomyces cerevisiae (strain RM11-1a) (Baker's yeast).